The following is a 56-amino-acid chain: Large ribosomal subunit protein bL33 (56 aa).

Belongs to the bacterial ribosomal protein bL33 family.

This Delftia acidovorans (strain DSM 14801 / SPH-1) protein is Large ribosomal subunit protein bL33.